The chain runs to 380 residues: Cytochrome b (380 aa).

4 helical membrane-spanning segments follow: residues 34 to 54, 78 to 99, 114 to 134, and 179 to 199; these read FGSL…LLAA, WLIR…YLHI, WNTG…GYVL, and FFTL…IHLT. Positions 84 and 98 each coordinate heme b. Heme b-binding residues include histidine 183 and histidine 197. Histidine 202 contacts a ubiquinone. A run of 4 helical transmembrane segments spans residues 227-247, 289-309, 321-341, and 348-368; these read LKDT…ALFS, LGGV…PLLH, LFQL…WVGS, and FIII…ILFP.

The protein belongs to the cytochrome b family. The cytochrome bc1 complex contains 11 subunits: 3 respiratory subunits (MT-CYB, CYC1 and UQCRFS1), 2 core proteins (UQCRC1 and UQCRC2) and 6 low-molecular weight proteins (UQCRH/QCR6, UQCRB/QCR7, UQCRQ/QCR8, UQCR10/QCR9, UQCR11/QCR10 and a cleavage product of UQCRFS1). This cytochrome bc1 complex then forms a dimer. It depends on heme b as a cofactor.

The protein resides in the mitochondrion inner membrane. Functionally, component of the ubiquinol-cytochrome c reductase complex (complex III or cytochrome b-c1 complex) that is part of the mitochondrial respiratory chain. The b-c1 complex mediates electron transfer from ubiquinol to cytochrome c. Contributes to the generation of a proton gradient across the mitochondrial membrane that is then used for ATP synthesis. The chain is Cytochrome b (MT-CYB) from Grus nigricollis (Black-necked crane).